The chain runs to 375 residues: DNA replication and repair protein RecF (375 aa).

30–37 (GLNGQGKT) contacts ATP.

The protein belongs to the RecF family.

It is found in the cytoplasm. Functionally, the RecF protein is involved in DNA metabolism; it is required for DNA replication and normal SOS inducibility. RecF binds preferentially to single-stranded, linear DNA. It also seems to bind ATP. The sequence is that of DNA replication and repair protein RecF from Halothermothrix orenii (strain H 168 / OCM 544 / DSM 9562).